The primary structure comprises 102 residues: Large ribosomal subunit protein bL21 (102 aa).

Belongs to the bacterial ribosomal protein bL21 family. As to quaternary structure, part of the 50S ribosomal subunit. Contacts protein L20.

Its function is as follows. This protein binds to 23S rRNA in the presence of protein L20. This is Large ribosomal subunit protein bL21 from Leptospira biflexa serovar Patoc (strain Patoc 1 / Ames).